The following is a 230-amino-acid chain: Probable thioesterase YBR096W (230 aa).

Belongs to the lcsJ thioesterase family.

The chain is Probable thioesterase YBR096W from Saccharomyces cerevisiae (strain ATCC 204508 / S288c) (Baker's yeast).